We begin with the raw amino-acid sequence, 301 residues long: Glucose-1-phosphate adenylyltransferase large subunit (301 aa).

It belongs to the bacterial/plant glucose-1-phosphate adenylyltransferase family. Heterotetramer.

It is found in the plastid. Its subcellular location is the chloroplast. The protein localises to the amyloplast. The enzyme catalyses alpha-D-glucose 1-phosphate + ATP + H(+) = ADP-alpha-D-glucose + diphosphate. It participates in glycan biosynthesis; starch biosynthesis. Its activity is regulated as follows. Insensitive to 3'phosphoglycerate and orthophosphate. Its function is as follows. This protein plays a role in synthesis of starch. It catalyzes the synthesis of the activated glycosyl donor, ADP-glucose from Glc-1-P and ATP. The sequence is that of Glucose-1-phosphate adenylyltransferase large subunit (AGA.1) from Triticum aestivum (Wheat).